The primary structure comprises 1400 residues: Macrophage-stimulating protein receptor (1400 aa).

A signal peptide spans 1 to 24 (MELLPPLPQSFLLLLLLPAKPAAG). Topologically, residues 25-957 (EDWQCPRTPY…PGPDGVPQST (933 aa)) are extracellular. The Sema domain occupies 31-522 (RTPYAASRDF…SGDQVFQVPI (492 aa)). Asn-66 carries N-linked (GlcNAc...) asparagine glycosylation. 7 disulfide bridges follow: Cys-101–Cys-104, Cys-107–Cys-162, Cys-135–Cys-143, Cys-174–Cys-177, Cys-300–Cys-367, Cys-385–Cys-407, and Cys-386–Cys-422. Asn-419, Asn-458, and Asn-488 each carry an N-linked (GlcNAc...) asparagine glycan. 4 disulfide bridges follow: Cys-527–Cys-545, Cys-533–Cys-567, Cys-536–Cys-552, and Cys-548–Cys-558. IPT/TIG domains lie at 569–671 (PKLT…FRVD), 684–767 (PVLI…FQYR), and 770–860 (PVVL…FRFL). 4 N-linked (GlcNAc...) asparagine glycosylation sites follow: Asn-654, Asn-720, Asn-841, and Asn-897. A helical transmembrane segment spans residues 958–978 (LLGILLPLLLLVAALATALVF). Over 979 to 1400 (SYWWRRKQLV…RPLSEPPRPT (422 aa)) the chain is Cytoplasmic. A Protein kinase domain is found at 1082–1345 (THSDRVIGKG…VLVGEVEQIV (264 aa)). ATP is bound by residues 1088–1096 (IGKGHFGVV), Lys-1114, and 1161–1164 (LPYM). The active-site Proton acceptor is the Asp-1208. Position 1212 (Arg-1212) interacts with ATP. Phosphotyrosine; by autocatalysis occurs at positions 1238, 1239, 1353, and 1360. The disordered stretch occupies residues 1367-1400 (TSHEMNVRPEQPQFSPMPGNVRRPRPLSEPPRPT).

The protein belongs to the protein kinase superfamily. Tyr protein kinase family. Heterodimer of an alpha chain and a beta chain which are disulfide linked. Binds PLXNB1. Associates with and is negatively regulated by HYAL2. Interacts when phosphorylated with downstream effectors including PIK3R1, PCLG1, GRB2 and GAB1. Interacts with integrin beta1/ITGB1 in a ligand-independent fashion. Proteolytic processing yields the two subunits. Post-translationally, autophosphorylated in response to ligand binding on Tyr-1238 and Tyr-1239 in the kinase domain leading to further phosphorylation of Tyr-1353 and Tyr-1360 in the C-terminal multifunctional docking site. In terms of processing, ubiquitinated. Ubiquitination by CBL regulates the receptor stability and activity through proteasomal degradation. O-mannosylation of IPT/TIG domains on Thr or Ser residues by TMEM260 is required for protein maturation. O-mannosylated residues are composed of single mannose glycans that are not elongated or modified. As to expression, expressed in colon, skin, lung and bone marrow.

Its subcellular location is the membrane. It carries out the reaction L-tyrosyl-[protein] + ATP = O-phospho-L-tyrosyl-[protein] + ADP + H(+). In its inactive state, the C-terminal tail interacts with the catalytic domain and inhibits the kinase activity. Upon ligand binding, the C-terminal tail is displaced and becomes phosphorylated, thus increasing the kinase activity. Receptor tyrosine kinase that transduces signals from the extracellular matrix into the cytoplasm by binding to MST1 ligand. Regulates many physiological processes including cell survival, migration and differentiation. Ligand binding at the cell surface induces autophosphorylation of RON on its intracellular domain that provides docking sites for downstream signaling molecules. Following activation by ligand, interacts with the PI3-kinase subunit PIK3R1, PLCG1 or the adapter GAB1. Recruitment of these downstream effectors by RON leads to the activation of several signaling cascades including the RAS-ERK, PI3 kinase-AKT, or PLCgamma-PKC. RON signaling activates the wound healing response by promoting epithelial cell migration, proliferation as well as survival at the wound site. Also plays a role in the innate immune response by regulating the migration and phagocytic activity of macrophages. Alternatively, RON can also promote signals such as cell migration and proliferation in response to growth factors other than MST1 ligand. The sequence is that of Macrophage-stimulating protein receptor (MST1R) from Homo sapiens (Human).